The sequence spans 362 residues: MKHPLEELKDPTENLLLWIGRFLRYKCTSLSNSQVKDQNKVFECLNELNQACSSSQLEKVCKKARNAGLLGINTYALPLLKFHEYFSKARLITERLAFNSLKNIDEVMLAEFLSVYTGGLSLATKKNYRIALLGLFSYIDKQNQDENEKSYIYNITLKNISGVNQSAGNKLPTHLNNEELEKFLESIDKIEMSAKVRARNRLLIKIIVFTGMRSNEALQLKIKDFTLENGCYTILIKGKGDKYRAVMLKAFHIESLLKEWLIERELYPVKNDLLFCNQKGSALTQAYLYKQVERIINFAGLRREKNGAHMLRHSFATLLYQKRHDLILVQEALGHASLNTSRIYTHFDKQRLEEAASIWEEN.

In terms of domain architecture, Core-binding (CB) spans Glu43 to Asp140. The Tyr recombinase domain maps to Lys170–Ser357. Residues Arg213, Lys239, His309, Arg312, and His335 contribute to the active site. The active-site O-(3'-phospho-DNA)-tyrosine intermediate is Tyr344.

Belongs to the 'phage' integrase family. XerH subfamily.

It is found in the cytoplasm. With respect to regulation, ftsK is required for recombination. Its function is as follows. Site-specific tyrosine recombinase, which acts by catalyzing the cutting and rejoining of the recombining DNA molecules. Involved in chromosome segregation. May contribute to chromosome decatenation. This Helicobacter pylori (strain ATCC 700392 / 26695) (Campylobacter pylori) protein is Tyrosine recombinase XerH.